A 443-amino-acid polypeptide reads, in one-letter code: COP9 signalosome complex subunit 2 (443 aa).

The interval 1–275 (MSDMEDDFMC…DESGSPRRTT (275 aa)) is mediates interaction with NIF3L1. The region spanning 254-416 (AHTDFFEAFK…QLLELDHQKR (163 aa)) is the PCI domain.

The protein belongs to the CSN2 family. As to quaternary structure, component of the CSN complex, composed of COPS1/GPS1, COPS2, COPS3, COPS4, COPS5, COPS6, COPS7 (COPS7A or COPS7B), COPS8 and COPS9 isoform 1. In the complex, it probably interacts directly with COPS1, COPS4, COPS5, COPS6 and COPS7 (COPS7A or COPS7B). Specifically interacts with the ligand binding domain of the thyroid receptor (TR). Does not require the presence of thyroid hormone for its interaction. Interacts with CUL1 and CUL2. Interacts with IRF8/ICSBP1 and with nuclear receptors NR2F1 and NR0B1. Interacts with NIF3L1. Post-translationally, phosphorylated by CK2 and PKD kinases.

Its subcellular location is the cytoplasm. It localises to the nucleus. Functionally, essential component of the COP9 signalosome complex (CSN), a complex involved in various cellular and developmental processes. The CSN complex is an essential regulator of the ubiquitin (Ubl) conjugation pathway by mediating the deneddylation of the cullin subunits of SCF-type E3 ligase complexes, leading to decrease the Ubl ligase activity of SCF-type complexes such as SCF, CSA or DDB2. The complex is also involved in phosphorylation of p53/TP53, c-jun/JUN, IkappaBalpha/NFKBIA, ITPK1 and IRF8/ICSBP, possibly via its association with CK2 and PKD kinases. CSN-dependent phosphorylation of TP53 and JUN promotes and protects degradation by the Ubl system, respectively. Involved in early stage of neuronal differentiation via its interaction with NIF3L1. In Homo sapiens (Human), this protein is COP9 signalosome complex subunit 2 (COPS2).